We begin with the raw amino-acid sequence, 308 residues long: Probable manganese-dependent inorganic pyrophosphatase (308 aa).

Mn(2+) is bound by residues histidine 9, aspartate 13, aspartate 15, aspartate 75, histidine 97, and aspartate 149.

The protein belongs to the PPase class C family. It depends on Mn(2+) as a cofactor.

The protein localises to the cytoplasm. The enzyme catalyses diphosphate + H2O = 2 phosphate + H(+). The polypeptide is Probable manganese-dependent inorganic pyrophosphatase (Bacillus pumilus (strain SAFR-032)).